A 207-amino-acid polypeptide reads, in one-letter code: Large ribosomal subunit protein uL4 (207 aa).

The interval 49–78 (HAVKNRSAVSGGGRKPWRQKGTGRARQGSI) is disordered.

It belongs to the universal ribosomal protein uL4 family. As to quaternary structure, part of the 50S ribosomal subunit.

Its function is as follows. One of the primary rRNA binding proteins, this protein initially binds near the 5'-end of the 23S rRNA. It is important during the early stages of 50S assembly. It makes multiple contacts with different domains of the 23S rRNA in the assembled 50S subunit and ribosome. Functionally, forms part of the polypeptide exit tunnel. In Streptococcus suis (strain 98HAH33), this protein is Large ribosomal subunit protein uL4.